The chain runs to 100 residues: MHFTQREQDKLMIVVAAEVARRRKARGLKLNHPEALALISDELLEGARDGKTVAELMSYGRQILNKEDVMDGVEHMITDIEIEATFPDGTKLITVHHPIV.

This sequence belongs to the urease gamma subunit family. In terms of assembly, heterotrimer of UreA (gamma), UreB (beta) and UreC (alpha) subunits. Three heterotrimers associate to form the active enzyme.

Its subcellular location is the cytoplasm. The enzyme catalyses urea + 2 H2O + H(+) = hydrogencarbonate + 2 NH4(+). It participates in nitrogen metabolism; urea degradation; CO(2) and NH(3) from urea (urease route): step 1/1. The protein is Urease subunit gamma of Staphylococcus aureus (strain N315).